The primary structure comprises 424 residues: UDP-N-acetylglucosamine 1-carboxyvinyltransferase (424 aa).

Position 22–23 (22–23) interacts with phosphoenolpyruvate; that stretch reads KN. A UDP-N-acetyl-alpha-D-glucosamine-binding site is contributed by Arg95. Cys119 acts as the Proton donor in catalysis. Cys119 carries the 2-(S-cysteinyl)pyruvic acid O-phosphothioketal modification. Residues 124–128, Asp311, and Ile333 each bind UDP-N-acetyl-alpha-D-glucosamine; that span reads RPVDQ.

This sequence belongs to the EPSP synthase family. MurA subfamily.

It localises to the cytoplasm. It catalyses the reaction phosphoenolpyruvate + UDP-N-acetyl-alpha-D-glucosamine = UDP-N-acetyl-3-O-(1-carboxyvinyl)-alpha-D-glucosamine + phosphate. The protein operates within cell wall biogenesis; peptidoglycan biosynthesis. In terms of biological role, cell wall formation. Adds enolpyruvyl to UDP-N-acetylglucosamine. This is UDP-N-acetylglucosamine 1-carboxyvinyltransferase from Polaromonas sp. (strain JS666 / ATCC BAA-500).